Here is a 472-residue protein sequence, read N- to C-terminus: Probable serine/threonine-protein kinase At1g01540 (472 aa).

A helical transmembrane segment spans residues 24–44 (LWVVIGILLGSLIVIALFLLS). A phosphothreonine mark is found at Thr67 and Thr143. In terms of domain architecture, Protein kinase spans 154–431 (LCEENVIGEG…IHMLEAEDLL (278 aa)). ATP is bound by residues 160-168 (IGEGGYGIV) and Lys182. Phosphotyrosine is present on Tyr227. Asp280 functions as the Proton acceptor in the catalytic mechanism. Residue Ser284 is modified to Phosphoserine. 2 positions are modified to phosphothreonine: Thr314 and Thr319. A Phosphotyrosine modification is found at Tyr327. The span at 437 to 449 (RTTRDHGSRERQE) shows a compositional bias: basic and acidic residues. Residues 437–472 (RTTRDHGSRERQETAVVAAGSESGESGSRHHQQKQR) are disordered. A compositionally biased stretch (low complexity) spans 451-462 (AVVAAGSESGES).

This sequence belongs to the protein kinase superfamily. Ser/Thr protein kinase family.

The protein resides in the membrane. The catalysed reaction is L-seryl-[protein] + ATP = O-phospho-L-seryl-[protein] + ADP + H(+). It carries out the reaction L-threonyl-[protein] + ATP = O-phospho-L-threonyl-[protein] + ADP + H(+). This is Probable serine/threonine-protein kinase At1g01540 from Arabidopsis thaliana (Mouse-ear cress).